A 584-amino-acid chain; its full sequence is Gag-Pro polyprotein (584 aa).

Residue G2 is the site of N-myristoyl glycine; by host attachment. The interval 93 to 117 (AREAPPSAPPADDPQKPPPYPEHAQ) is disordered. Positions 98-101 (PSAP) match the PTAP/PSAP motif motif. Residues 98–113 (PSAPPADDPQKPPPYP) are compositionally biased toward pro residues. The PPXY motif motif lies at 109–112 (PPPY). CCHC-type zinc fingers lie at residues 349-366 (QPCF…DCKQ) and 372-389 (GPCP…DCPQ). The Peptidase A2 domain maps to 457 to 535 (VQALLDTGAD…DQWTILGRDA (79 aa)). D462 (for protease activity; shared with dimeric partner) is an active-site residue. The disordered stretch occupies residues 564–584 (EHLPPPPEVSQFPLNRSASRP). The segment covering 575 to 584 (FPLNRSASRP) has biased composition (polar residues).

In terms of assembly, interacts with human TSG101. This interaction is essential for budding and release of viral particles. In terms of processing, specific enzymatic cleavages by the viral protease yield mature proteins. The polyprotein is cleaved during and after budding, this process is termed maturation. The protease is autoproteolytically processed at its N- and C-termini.

The protein resides in the virion. Functionally, matrix protein p19 targets Gag, Gag-Pro and Gag-Pro-Pol polyproteins to the plasma membrane via a multipartite membrane binding signal, that includes its myristoylated N-terminus. Also mediates nuclear localization of the preintegration complex. Capsid protein p24 forms the conical core of the virus that encapsulates the genomic RNA-nucleocapsid complex. In terms of biological role, nucleocapsid protein p15 is involved in the packaging and encapsidation of two copies of the genome. Its function is as follows. The aspartyl protease mediates proteolytic cleavages of Gag, Gag-Pro and Gag-Pro-Pol polyproteins during or shortly after the release of the virion from the plasma membrane. Cleavages take place as an ordered, step-wise cascade to yield mature proteins. This process is called maturation. Displays maximal activity during the budding process just prior to particle release from the cell. Hydrolyzes host EIF4GI in order to shut off the capped cellular mRNA translation. The resulting inhibition of cellular protein synthesis serves to ensure maximal viral gene expression and to evade host immune response. This is Gag-Pro polyprotein (gag-pro) from Human T-cell leukemia virus 3 (strain Pyl43) (HTLV-3).